A 234-amino-acid chain; its full sequence is Large ribosomal subunit protein uL1 (234 aa).

This sequence belongs to the universal ribosomal protein uL1 family. As to quaternary structure, part of the 50S ribosomal subunit.

Its function is as follows. Binds directly to 23S rRNA. The L1 stalk is quite mobile in the ribosome, and is involved in E site tRNA release. Protein L1 is also a translational repressor protein, it controls the translation of the L11 operon by binding to its mRNA. The sequence is that of Large ribosomal subunit protein uL1 from Anaeromyxobacter sp. (strain Fw109-5).